The sequence spans 157 residues: Small ribosomal subunit protein uS7 (157 aa).

This sequence belongs to the universal ribosomal protein uS7 family. In terms of assembly, part of the 30S ribosomal subunit. Contacts proteins S9 and S11.

Functionally, one of the primary rRNA binding proteins, it binds directly to 16S rRNA where it nucleates assembly of the head domain of the 30S subunit. Is located at the subunit interface close to the decoding center, probably blocks exit of the E-site tRNA. This is Small ribosomal subunit protein uS7 from Chlamydia trachomatis serovar L2 (strain ATCC VR-902B / DSM 19102 / 434/Bu).